A 610-amino-acid chain; its full sequence is Zinc finger protein 823 (610 aa).

The region spanning 4–97 (VAFEDVAVNF…VNKNTPRVNP (94 aa)) is the KRAB domain. C2H2-type zinc fingers lie at residues 164–186 (FDCKECAKTFSSLGNLRRHMAAH), 192–214 (YKCKLCGKAFVWPSLFHLHERTH), 220–242 (YECKQCSKAFPFYSSYLRHERIH), 248–270 (YECKQCSKAFPDYSTYLRHERTH), 276–298 (YKCTQCGKAFSCYYYTRLHERTH), 304–326 (YACKQCGKTFYHHTSFRRHMIRH), 332–354 (HKCKICGKGFDCPSSVRNHETTH), 360–382 (YECKQCGKVLSHSSSFRSHMITH), 388–410 (QKCKICGKAFGCPSLFQRHERTH), and 416–438 (YQCKQCGKAFSLAGSLRRHEATH). The segment at 444-465 (YKCQCGKAFSDLSSFQNHETTH) adopts a C2H2-type 11; atypical zinc-finger fold. C2H2-type zinc fingers lie at residues 471–493 (YECKECGKAFSCFKYLSQHKRTH), 499–521 (YECKTCRKAFSHFSNLKVHERIH), 527–549 (YECKECGKAFSWLTCLLRHERIH), 555–577 (YECLQCGKAFTRSRFLRGHEKTH), and 583–605 (YECKECGKALSSLRSLHRHKRTH).

The protein belongs to the krueppel C2H2-type zinc-finger protein family.

It localises to the nucleus. Its function is as follows. May be involved in transcriptional regulation. The chain is Zinc finger protein 823 (ZNF823) from Homo sapiens (Human).